The primary structure comprises 525 residues: GMP synthase [glutamine-hydrolyzing] (525 aa).

The Glutamine amidotransferase type-1 domain occupies 9–207; the sequence is RILILDFGSQ…VLEICGCAAL (199 aa). Cys-86 acts as the Nucleophile in catalysis. Active-site residues include His-181 and Glu-183. One can recognise a GMPS ATP-PPase domain in the interval 208–400; sequence WTPATIIEDA…LGLPYDMLYR (193 aa). Residue 235–241 coordinates ATP; it reads SGGVDSS.

Homodimer.

It catalyses the reaction XMP + L-glutamine + ATP + H2O = GMP + L-glutamate + AMP + diphosphate + 2 H(+). It functions in the pathway purine metabolism; GMP biosynthesis; GMP from XMP (L-Gln route): step 1/1. In terms of biological role, catalyzes the synthesis of GMP from XMP. This chain is GMP synthase [glutamine-hydrolyzing], found in Edwardsiella ictaluri (strain 93-146).